The chain runs to 267 residues: Undecaprenyl-diphosphatase (267 aa).

7 consecutive transmembrane segments (helical) span residues 7 to 29, 41 to 61, 69 to 89, 96 to 116, 173 to 193, 207 to 227, and 239 to 259; these read LILG…HMIL, FWKS…IFVF, LDIW…GLFV, LFNG…FILI, AAEF…AYSI, IPLG…IKFF, and FGIY…SGIL.

The protein belongs to the UppP family.

Its subcellular location is the cell inner membrane. The catalysed reaction is di-trans,octa-cis-undecaprenyl diphosphate + H2O = di-trans,octa-cis-undecaprenyl phosphate + phosphate + H(+). Functionally, catalyzes the dephosphorylation of undecaprenyl diphosphate (UPP). Confers resistance to bacitracin. The chain is Undecaprenyl-diphosphatase from Campylobacter jejuni subsp. jejuni serotype O:6 (strain 81116 / NCTC 11828).